The chain runs to 45 residues: Ribosome-inactivating protein TAP-29 (45 aa).

Belongs to the ribosome-inactivating protein family. Type 1 RIP subfamily.

It catalyses the reaction Endohydrolysis of the N-glycosidic bond at one specific adenosine on the 28S rRNA.. Its function is as follows. Capable of inhibiting HIV-1 infection and replication. It inactivates eukaryotic 60S ribosomal subunits. This chain is Ribosome-inactivating protein TAP-29, found in Trichosanthes kirilowii (Chinese snake gourd).